The chain runs to 152 residues: Large ribosomal subunit protein uL15 (152 aa).

The disordered stretch occupies residues 1–66; sequence MLQLHTIKPN…PLHRRLPKKG (66 aa). Gly residues predominate over residues 24 to 36; that stretch reads ESSGLGKTCGKGN.

The protein belongs to the universal ribosomal protein uL15 family. As to quaternary structure, part of the 50S ribosomal subunit.

Functionally, binds to the 23S rRNA. This chain is Large ribosomal subunit protein uL15, found in Akkermansia muciniphila (strain ATCC BAA-835 / DSM 22959 / JCM 33894 / BCRC 81048 / CCUG 64013 / CIP 107961 / Muc).